The chain runs to 95 residues: Aspartyl/glutamyl-tRNA(Asn/Gln) amidotransferase subunit C (95 aa).

The protein belongs to the GatC family. Heterotrimer of A, B and C subunits.

It carries out the reaction L-glutamyl-tRNA(Gln) + L-glutamine + ATP + H2O = L-glutaminyl-tRNA(Gln) + L-glutamate + ADP + phosphate + H(+). The catalysed reaction is L-aspartyl-tRNA(Asn) + L-glutamine + ATP + H2O = L-asparaginyl-tRNA(Asn) + L-glutamate + ADP + phosphate + 2 H(+). Its function is as follows. Allows the formation of correctly charged Asn-tRNA(Asn) or Gln-tRNA(Gln) through the transamidation of misacylated Asp-tRNA(Asn) or Glu-tRNA(Gln) in organisms which lack either or both of asparaginyl-tRNA or glutaminyl-tRNA synthetases. The reaction takes place in the presence of glutamine and ATP through an activated phospho-Asp-tRNA(Asn) or phospho-Glu-tRNA(Gln). The sequence is that of Aspartyl/glutamyl-tRNA(Asn/Gln) amidotransferase subunit C from Acidiphilium cryptum (strain JF-5).